A 290-amino-acid polypeptide reads, in one-letter code: Bifunctional protein FolD 3 (290 aa).

Residues 163-165 and I229 each bind NADP(+); that span reads GHS.

It belongs to the tetrahydrofolate dehydrogenase/cyclohydrolase family. As to quaternary structure, homodimer.

It catalyses the reaction (6R)-5,10-methylene-5,6,7,8-tetrahydrofolate + NADP(+) = (6R)-5,10-methenyltetrahydrofolate + NADPH. It carries out the reaction (6R)-5,10-methenyltetrahydrofolate + H2O = (6R)-10-formyltetrahydrofolate + H(+). It functions in the pathway one-carbon metabolism; tetrahydrofolate interconversion. Functionally, catalyzes the oxidation of 5,10-methylenetetrahydrofolate to 5,10-methenyltetrahydrofolate and then the hydrolysis of 5,10-methenyltetrahydrofolate to 10-formyltetrahydrofolate. This is Bifunctional protein FolD 3 from Roseobacter denitrificans (strain ATCC 33942 / OCh 114) (Erythrobacter sp. (strain OCh 114)).